A 379-amino-acid chain; its full sequence is MNNTEYYERLGVDKNASQDEIKKAYRKMSKKYHPDLNKEEGAEDKYKEVQEAYETLSDEQKRAAYDQYGEAGRNGGFGGGGFGGASGFSGFGGRSGGFGGFEDIFSSFFGGGGAQVNPNAPRQGDDLQYRINLKFEEAIFGVEKQVKYNREELCHTCGGSGAKAGTHPETCHKCGGRGQINVVRDTPLGRMQTQTTCDVCHGTGKEIKEKSTTCHGSGHEKVAHTVKVTVPAGVETGQKMRLQGQGDAGVNGGPYGDLYVVFQVEASDKFERDGAEIYYKMPMDFVQAALGDEVEVPTVHGNVKLKIPAGTQTGANFRLKGKGAPKLRGSGNGDQYVIINIVTPKNMNQAQKEALQAFAKASGIEVSGSGQKGFFDKFK.

A J domain is found at glutamate 5 to glycine 69. The segment at glycine 141–alanine 223 adopts a CR-type zinc-finger fold. The Zn(2+) site is built by cysteine 154, cysteine 157, cysteine 171, cysteine 174, cysteine 197, cysteine 200, and cysteine 214. CXXCXGXG motif repeat units follow at residues cysteine 154 to glycine 161, cysteine 171 to glycine 178, cysteine 197 to glycine 204, and serine 211 to glycine 218.

It belongs to the DnaJ family. As to quaternary structure, homodimer. Zn(2+) serves as cofactor.

The protein resides in the cytoplasm. Its function is as follows. Participates actively in the response to hyperosmotic and heat shock by preventing the aggregation of stress-denatured proteins and by disaggregating proteins, also in an autonomous, DnaK-independent fashion. Unfolded proteins bind initially to DnaJ; upon interaction with the DnaJ-bound protein, DnaK hydrolyzes its bound ATP, resulting in the formation of a stable complex. GrpE releases ADP from DnaK; ATP binding to DnaK triggers the release of the substrate protein, thus completing the reaction cycle. Several rounds of ATP-dependent interactions between DnaJ, DnaK and GrpE are required for fully efficient folding. Also involved, together with DnaK and GrpE, in the DNA replication of plasmids through activation of initiation proteins. This chain is Chaperone protein DnaJ, found in Lactococcus lactis subsp. cremoris (Streptococcus cremoris).